Reading from the N-terminus, the 296-residue chain is dTDP-rhamnosyl transferase RfbF (296 aa).

The protein belongs to the glycosyltransferase 2 family.

It participates in bacterial outer membrane biogenesis; lipopolysaccharide biosynthesis. This Shigella flexneri protein is dTDP-rhamnosyl transferase RfbF (rfbF).